Reading from the N-terminus, the 699-residue chain is Elongation factor G (699 aa).

The tr-type G domain occupies 8–288 (EDYRNFGIMA…AVVDYLPSPI (281 aa)). GTP-binding positions include 17–24 (AHIDAGKT), 86–90 (DTPGH), and 140–143 (NKMD).

This sequence belongs to the TRAFAC class translation factor GTPase superfamily. Classic translation factor GTPase family. EF-G/EF-2 subfamily.

It localises to the cytoplasm. Functionally, catalyzes the GTP-dependent ribosomal translocation step during translation elongation. During this step, the ribosome changes from the pre-translocational (PRE) to the post-translocational (POST) state as the newly formed A-site-bound peptidyl-tRNA and P-site-bound deacylated tRNA move to the P and E sites, respectively. Catalyzes the coordinated movement of the two tRNA molecules, the mRNA and conformational changes in the ribosome. The protein is Elongation factor G of Sinorhizobium fredii (strain NBRC 101917 / NGR234).